The primary structure comprises 65 residues: Large ribosomal subunit protein bL35 (65 aa).

Residues 1-15 (MPKLKTRKAAAKRFR) are compositionally biased toward basic residues. Residues 1–28 (MPKLKTRKAAAKRFRQTGTGKFTRRKAN) are disordered.

This sequence belongs to the bacterial ribosomal protein bL35 family.

The chain is Large ribosomal subunit protein bL35 from Cyanothece sp. (strain PCC 7425 / ATCC 29141).